The sequence spans 435 residues: Methylenetetrahydrofolate--tRNA-(uracil-5-)-methyltransferase TrmFO (435 aa).

10 to 15 is an FAD binding site; sequence GAGLAG.

The protein belongs to the MnmG family. TrmFO subfamily. It depends on FAD as a cofactor.

The protein localises to the cytoplasm. The catalysed reaction is uridine(54) in tRNA + (6R)-5,10-methylene-5,6,7,8-tetrahydrofolate + NADH + H(+) = 5-methyluridine(54) in tRNA + (6S)-5,6,7,8-tetrahydrofolate + NAD(+). The enzyme catalyses uridine(54) in tRNA + (6R)-5,10-methylene-5,6,7,8-tetrahydrofolate + NADPH + H(+) = 5-methyluridine(54) in tRNA + (6S)-5,6,7,8-tetrahydrofolate + NADP(+). In terms of biological role, catalyzes the folate-dependent formation of 5-methyl-uridine at position 54 (M-5-U54) in all tRNAs. This is Methylenetetrahydrofolate--tRNA-(uracil-5-)-methyltransferase TrmFO from Geotalea uraniireducens (strain Rf4) (Geobacter uraniireducens).